The primary structure comprises 201 residues: Recombination protein RecR (201 aa).

The segment at Cys-57–Cys-72 adopts a C4-type zinc-finger fold. The Toprim domain maps to Gly-81–Pro-176.

This sequence belongs to the RecR family.

May play a role in DNA repair. It seems to be involved in an RecBC-independent recombinational process of DNA repair. It may act with RecF and RecO. In Escherichia coli O17:K52:H18 (strain UMN026 / ExPEC), this protein is Recombination protein RecR.